A 262-amino-acid chain; its full sequence is MALFSPPISSSSLQNPNFIPKFSFSLLSSNRFSLLSVTRASSDSGSTSPTAAVSVEAPEPVEVIVKEPPQSTPAVKKEETATAKNVAVEGEEMKTTESVVKFQDARWINGTWDLKQFEKDGKTDWDSVIVAEAKRRKWLEENPETTSNDEPVLFDTSIIPWWAWIKRYHLPEAELLNGRAAMIGFFMAYFVDSLTGVGLVDQMGNFFCKTLLFVAVAGVLFIRKNEDVDKLKNLFDETTLYDKQWQAAWKNDDDESLGSKKK.

The N-terminal 39 residues, 1 to 39, are a transit peptide targeting the chloroplast; sequence MALFSPPISSSSLQNPNFIPKFSFSLLSSNRFSLLSVTR. A run of 2 helical transmembrane segments spans residues 180-200 and 202-222; these read AAMIGFFMAYFVDSLTGVGLV and QMGNFFCKTLLFVAVAGVLFI.

In terms of assembly, interacts with GGR. Forms homodimer, and heterodimer with LIL3.2. As to expression, expressed in photosynthetically active tissues (at protein level).

The protein localises to the plastid. It is found in the chloroplast thylakoid membrane. Its function is as follows. Light-harvesting-like protein required for biosynthesis of phytylated chlorophylls and alpha-tocopherol in green seedlings. Functions by anchoring geranylgeranyl reductase (GGR) in the thylakoid membrane, leading to the stabilization of GGR activity. Binds chlorophyll a in the thylakoid membrane. Plays a role in the regulation of chlorophyll biosynthesis under light stress and under standard growth conditions. The polypeptide is Light-harvesting complex-like protein 3 isotype 1, chloroplastic (LIL3.1) (Arabidopsis thaliana (Mouse-ear cress)).